The primary structure comprises 626 residues: Janus kinase and microtubule-interacting protein 1 (626 aa).

Residues 1-22 (MSKKGRSKGEKPEMETDAVQMA) form a disordered region. The segment at 1–365 (MSKKGRSKGE…KIKNLTRENV (365 aa)) is mediates association with microtubules. Coiled coils occupy residues 19–255 (VQMA…EAER) and 284–413 (ERDV…DDLS). The tract at residues 365-626 (VEMKEKLSAQ…ILFEPKLKFM (262 aa)) is mediates interaction with TYK2 and GABBR1. Serine 382 is subject to Phosphoserine. The span at 452–461 (ETLSETSYNT) shows a compositional bias: polar residues. A disordered region spans residues 452 to 477 (ETLSETSYNTDRTDRTPATPEEDLDD). At threonine 470 the chain carries Phosphothreonine. Residues 490 to 604 (QLTREYQALQ…EFRVLELEVR (115 aa)) are a coiled coil.

This sequence belongs to the JAKMIP family. As to quaternary structure, homodimer. Forms a complex with GABBR1 and KIF5B/kinesin-1. Interacts with JAK1 and TYK2. As to expression, predominantly expressed in neural tissues and lymphoid cells (at protein level). Isoform 2, isoform 3 and isoform 4 are specifically expressed in brain and retina. Isoform 1 and isoform 5 are also detected in liver, lung and skeletal muscle. Also detected in testis and to a lower extent spleen and intestine.

The protein resides in the cytoplasm. Its subcellular location is the cytoskeleton. The protein localises to the membrane. In terms of biological role, associates with microtubules and may play a role in the microtubule-dependent transport of the GABA-B receptor. May play a role in JAK1 signaling and regulate microtubule cytoskeleton rearrangements. This chain is Janus kinase and microtubule-interacting protein 1 (JAKMIP1), found in Homo sapiens (Human).